Consider the following 156-residue polypeptide: Methylated-DNA--protein-cysteine methyltransferase (156 aa).

The active-site Nucleophile; methyl group acceptor is cysteine 120.

This sequence belongs to the MGMT family.

The protein localises to the cytoplasm. It catalyses the reaction a 6-O-methyl-2'-deoxyguanosine in DNA + L-cysteinyl-[protein] = S-methyl-L-cysteinyl-[protein] + a 2'-deoxyguanosine in DNA. The catalysed reaction is a 4-O-methyl-thymidine in DNA + L-cysteinyl-[protein] = a thymidine in DNA + S-methyl-L-cysteinyl-[protein]. Functionally, involved in the cellular defense against the biological effects of O6-methylguanine (O6-MeG) and O4-methylthymine (O4-MeT) in DNA. Repairs the methylated nucleobase in DNA by stoichiometrically transferring the methyl group to a cysteine residue in the enzyme. This is a suicide reaction: the enzyme is irreversibly inactivated. The protein is Methylated-DNA--protein-cysteine methyltransferase of Sulfurisphaera tokodaii (strain DSM 16993 / JCM 10545 / NBRC 100140 / 7) (Sulfolobus tokodaii).